Reading from the N-terminus, the 695-residue chain is L-type lectin-domain containing receptor kinase S.7 (695 aa).

The N-terminal stretch at 1-23 (MPPRCRRLPLLFILLLAVRPLSA) is a signal peptide. At 24 to 331 (AAASSIAAAP…NHRRRHLFYK (308 aa)) the chain is on the extracellular side. The interval 37-276 (YRRISWASNL…VERWTFRTFG (240 aa)) is legume-lectin like. 2 N-linked (GlcNAc...) asparagine glycosylation sites follow: Asn-45 and Asn-279. Pro residues predominate over residues 286 to 320 (PTKYIGPMPPNNQPLPPPPSPSPSPPPPSPPPPPH). Residues 286 to 323 (PTKYIGPMPPNNQPLPPPPSPSPSPPPPSPPPPPHPNH) are disordered. Residues 332–352 (VLGGVLGGMVLLGLVVVGSAV) traverse the membrane as a helical segment. Over 353-695 (LLGRSVRRKN…TANTAFFSCR (343 aa)) the chain is Cytoplasmic. Phosphothreonine is present on Thr-376. Ser-378 bears the Phosphoserine mark. A phosphothreonine mark is found at Thr-386 and Thr-403. The 273-residue stretch at 389–661 (FDSGNVIGVG…SMLDGTAPLI (273 aa)) folds into the Protein kinase domain. ATP-binding positions include 395 to 403 (IGVGGSGAT) and Lys-418. Asp-514 functions as the Proton acceptor in the catalytic mechanism. At Thr-657 the chain carries Phosphothreonine.

In the N-terminal section; belongs to the leguminous lectin family. It in the C-terminal section; belongs to the protein kinase superfamily. Ser/Thr protein kinase family. In terms of assembly, interacts with INP1. Interaction with INP1 is required for DAF1 polar localization at the future aperture sites in tetrads. Autophosphorylated at Thr-376; Ser-378; Thr-386; Thr-403 and Thr-657. In terms of tissue distribution, expressed in roots, leaves, lemma, palea, pistil and anthers.

The protein resides in the cell membrane. The protein localises to the cytoplasm. Its subcellular location is the cytosol. It carries out the reaction L-seryl-[protein] + ATP = O-phospho-L-seryl-[protein] + ADP + H(+). The enzyme catalyses L-threonyl-[protein] + ATP = O-phospho-L-threonyl-[protein] + ADP + H(+). Its function is as follows. Legume-lectin receptor-like kinase required for normal pollen development and male fertility. Regulates pollen exine assembly and aperture development. Plays a critical role in annulus formation, and may participate in the formation of the fibrillar-granular layer underneath the operculum. May function by regulating the expression of genes involved in pollen exine development. Kinase activity is required for its function in pollen development. This is L-type lectin-domain containing receptor kinase S.7 from Oryza sativa subsp. japonica (Rice).